Consider the following 441-residue polypeptide: Glutamate--tRNA ligase 1 (441 aa).

The 'HIGH' region signature appears at 7–17 (PSPTGYMHIGN). Residues 236–240 (KMSKR) carry the 'KMSKS' region motif. Residue Lys239 coordinates ATP.

Belongs to the class-I aminoacyl-tRNA synthetase family. Glutamate--tRNA ligase type 1 subfamily. In terms of assembly, monomer.

The protein localises to the cytoplasm. The catalysed reaction is tRNA(Glu) + L-glutamate + ATP = L-glutamyl-tRNA(Glu) + AMP + diphosphate. Catalyzes the attachment of glutamate to tRNA(Glu) in a two-step reaction: glutamate is first activated by ATP to form Glu-AMP and then transferred to the acceptor end of tRNA(Glu). The sequence is that of Glutamate--tRNA ligase 1 from Anaplasma marginale (strain St. Maries).